Reading from the N-terminus, the 295-residue chain is Ethanolamine ammonia-lyase small subunit (295 aa).

Residues Val-207, Glu-228, and Cys-258 each contribute to the adenosylcob(III)alamin site.

This sequence belongs to the EutC family. In terms of assembly, the basic unit is a heterodimer which dimerizes to form tetramers. The heterotetramers trimerize; 6 large subunits form a core ring with 6 small subunits projecting outwards. The cofactor is adenosylcob(III)alamin.

The protein localises to the bacterial microcompartment. The enzyme catalyses ethanolamine = acetaldehyde + NH4(+). Its pathway is amine and polyamine degradation; ethanolamine degradation. Catalyzes the deamination of various vicinal amino-alcohols to oxo compounds. Allows this organism to utilize ethanolamine as the sole source of nitrogen and carbon in the presence of external vitamin B12. This chain is Ethanolamine ammonia-lyase small subunit, found in Escherichia coli O7:K1 (strain IAI39 / ExPEC).